The following is a 160-amino-acid chain: Transcriptional regulator MraZ (160 aa).

2 SpoVT-AbrB domains span residues 5 to 50 and 93 to 136; these read NFET…DGGY and AVEC…SQAE.

This sequence belongs to the MraZ family. As to quaternary structure, forms oligomers.

It is found in the cytoplasm. The protein localises to the nucleoid. This chain is Transcriptional regulator MraZ, found in Geotalea daltonii (strain DSM 22248 / JCM 15807 / FRC-32) (Geobacter daltonii).